Reading from the N-terminus, the 39-residue chain is Large ribosomal subunit protein bL36 (39 aa).

It belongs to the bacterial ribosomal protein bL36 family.

The protein is Large ribosomal subunit protein bL36 of Oenococcus oeni (strain ATCC BAA-331 / PSU-1).